The chain runs to 59 residues: DNA gyrase inhibitor YacG (59 aa).

Zn(2+) is bound by residues C7, C10, C25, and C29.

The protein belongs to the DNA gyrase inhibitor YacG family. In terms of assembly, interacts with GyrB. Requires Zn(2+) as cofactor.

Functionally, inhibits all the catalytic activities of DNA gyrase by preventing its interaction with DNA. Acts by binding directly to the C-terminal domain of GyrB, which probably disrupts DNA binding by the gyrase. In Geobacter sulfurreducens (strain ATCC 51573 / DSM 12127 / PCA), this protein is DNA gyrase inhibitor YacG.